We begin with the raw amino-acid sequence, 335 residues long: tRNA N6-adenosine threonylcarbamoyltransferase (335 aa).

A divalent metal cation contacts are provided by His109, His113, and Tyr130. Substrate contacts are provided by residues 130 to 134 (YVSGG), Asp162, Gly177, Glu181, and Asn266. Residue Asp294 coordinates a divalent metal cation.

The protein belongs to the KAE1 / TsaD family. As to quaternary structure, component of the EKC/KEOPS complex composed of at least GON7, TP53RK, TPRKB, OSGEP and LAGE3; the whole complex dimerizes. A divalent metal cation is required as a cofactor.

It localises to the cytoplasm. The protein resides in the nucleus. It catalyses the reaction L-threonylcarbamoyladenylate + adenosine(37) in tRNA = N(6)-L-threonylcarbamoyladenosine(37) in tRNA + AMP + H(+). Its function is as follows. Component of the EKC/KEOPS complex that is required for the formation of a threonylcarbamoyl group on adenosine at position 37 (t(6)A37) in tRNAs that read codons beginning with adenine. The complex is probably involved in the transfer of the threonylcarbamoyl moiety of threonylcarbamoyl-AMP (TC-AMP) to the N6 group of A37. OSGEP likely plays a direct catalytic role in this reaction, but requires other protein(s) of the complex to fulfill this activity. The protein is tRNA N6-adenosine threonylcarbamoyltransferase of Bos taurus (Bovine).